A 605-amino-acid chain; its full sequence is 9-cis-epoxycarotenoid dioxygenase NCED1, chloroplastic (605 aa).

A chloroplast-targeting transit peptide spans 1–16 (MATTTSHATNTWIKTK). Positions 55-89 (ILHFPKQSSNYQTPKNNTISHPKQENNNSSSSSTS) are disordered. Polar residues predominate over residues 60–75 (KQSSNYQTPKNNTISH). A compositionally biased stretch (low complexity) spans 80-89 (NNNSSSSSTS). Residues H302, H351, H416, and H592 each coordinate Fe cation.

Belongs to the carotenoid oxygenase family. It depends on Fe(2+) as a cofactor. Expressed in developing and ripening fruits. Highly expressed in pulp. Observed in unpollinated ovaries (e.g. ovules, placenta and pericarp). Expressed in flowers.

It is found in the plastid. Its subcellular location is the chloroplast stroma. It catalyses the reaction a 9-cis-epoxycarotenoid + O2 = a 12'-apo-carotenal + 2-cis,4-trans-xanthoxin. The enzyme catalyses 9-cis-violaxanthin + O2 = (3S,5R,6S)-5,6-epoxy-3-hydroxy-5,6-dihydro-12'-apo-beta-caroten-12'-al + 2-cis,4-trans-xanthoxin. It carries out the reaction 9'-cis-neoxanthin + O2 = (3S,5R,6R)-3,5-dihydroxy-6,7-didehydro-5,6-dihydro-12'-apo-beta-caroten-12'-al + 2-cis,4-trans-xanthoxin. The protein operates within plant hormone biosynthesis; abscisate biosynthesis. Its function is as follows. Has a 11,12(11',12') 9-cis epoxycarotenoid cleavage activity. Catalyzes the first step of abscisic-acid (ABA) biosynthesis from carotenoids. Required for ABA accumulation upon drought. Required for ABA-mediated regulation of anther/pollen development, including metabolism, cell wall modification and transcription level. Positive regulator of fruit ripening involved in the biosynthesis of abscisic acid (ABA); initiates ABA biosynthesis at the onset of fruit ripening. Modulates the degree of pigmentation and carotenoid composition as well as pectin catabolism during ripening and may regulate the ethylene production and action in climacteric tomato fruit. The polypeptide is 9-cis-epoxycarotenoid dioxygenase NCED1, chloroplastic (Solanum lycopersicum (Tomato)).